A 358-amino-acid polypeptide reads, in one-letter code: Carbamoyl phosphate synthase small chain (358 aa).

The interval 1–172 (MKAALALEDG…EAKRFESDGD (172 aa)) is CPSase. Ser45, Gly222, and Gly224 together coordinate L-glutamine. Residues 174–358 (EVVLVDCGVK…RYVDMLREYR (185 aa)) enclose the Glutamine amidotransferase type-1 domain. The active-site Nucleophile is the Cys249. L-glutamine-binding residues include Leu250, Gln253, Asn291, and Phe294. Active-site residues include His333 and Glu335.

The protein belongs to the CarA family. Composed of two chains; the small (or glutamine) chain promotes the hydrolysis of glutamine to ammonia, which is used by the large (or ammonia) chain to synthesize carbamoyl phosphate. Tetramer of heterodimers (alpha,beta)4.

The catalysed reaction is hydrogencarbonate + L-glutamine + 2 ATP + H2O = carbamoyl phosphate + L-glutamate + 2 ADP + phosphate + 2 H(+). The enzyme catalyses L-glutamine + H2O = L-glutamate + NH4(+). It participates in amino-acid biosynthesis; L-arginine biosynthesis; carbamoyl phosphate from bicarbonate: step 1/1. It functions in the pathway pyrimidine metabolism; UMP biosynthesis via de novo pathway; (S)-dihydroorotate from bicarbonate: step 1/3. In terms of biological role, small subunit of the glutamine-dependent carbamoyl phosphate synthetase (CPSase). CPSase catalyzes the formation of carbamoyl phosphate from the ammonia moiety of glutamine, carbonate, and phosphate donated by ATP, constituting the first step of 2 biosynthetic pathways, one leading to arginine and/or urea and the other to pyrimidine nucleotides. The small subunit (glutamine amidotransferase) binds and cleaves glutamine to supply the large subunit with the substrate ammonia. This is Carbamoyl phosphate synthase small chain from Archaeoglobus fulgidus (strain ATCC 49558 / DSM 4304 / JCM 9628 / NBRC 100126 / VC-16).